Reading from the N-terminus, the 463-residue chain is Bifunctional protein HldE (463 aa).

The ribokinase stretch occupies residues 1-315 (MKKILVIGDL…LILNQTHPKI (315 aa)). An ATP-binding site is contributed by 191–194 (NRAE). Aspartate 260 is a catalytic residue. Residues 334–463 (FTNGCFDLLH…IEKIKRTHND (130 aa)) form a cytidylyltransferase region.

This sequence in the N-terminal section; belongs to the carbohydrate kinase PfkB family. The protein in the C-terminal section; belongs to the cytidylyltransferase family. Homodimer.

The enzyme catalyses D-glycero-beta-D-manno-heptose 7-phosphate + ATP = D-glycero-beta-D-manno-heptose 1,7-bisphosphate + ADP + H(+). It catalyses the reaction D-glycero-beta-D-manno-heptose 1-phosphate + ATP + H(+) = ADP-D-glycero-beta-D-manno-heptose + diphosphate. The protein operates within nucleotide-sugar biosynthesis; ADP-L-glycero-beta-D-manno-heptose biosynthesis; ADP-L-glycero-beta-D-manno-heptose from D-glycero-beta-D-manno-heptose 7-phosphate: step 1/4. It participates in nucleotide-sugar biosynthesis; ADP-L-glycero-beta-D-manno-heptose biosynthesis; ADP-L-glycero-beta-D-manno-heptose from D-glycero-beta-D-manno-heptose 7-phosphate: step 3/4. In terms of biological role, catalyzes the phosphorylation of D-glycero-D-manno-heptose 7-phosphate at the C-1 position to selectively form D-glycero-beta-D-manno-heptose-1,7-bisphosphate. Functionally, catalyzes the ADP transfer from ATP to D-glycero-beta-D-manno-heptose 1-phosphate, yielding ADP-D-glycero-beta-D-manno-heptose. This chain is Bifunctional protein HldE, found in Helicobacter pylori (strain HPAG1).